The chain runs to 198 residues: Recombination protein RecR (198 aa).

A C4-type zinc finger spans residues 57-72 (CSICCNLSEHDPCPIC). The region spanning 80–175 (NIVCVVETPQ…KVTRLGYGLP (96 aa)) is the Toprim domain.

Belongs to the RecR family.

Its function is as follows. May play a role in DNA repair. It seems to be involved in an RecBC-independent recombinational process of DNA repair. It may act with RecF and RecO. This Endomicrobium trichonymphae protein is Recombination protein RecR.